The chain runs to 196 residues: Molybdenum cofactor guanylyltransferase (196 aa).

GTP is bound by residues Leu12–Gly14, Lys25, Asn53, Asp71, and Asp101. Asp101 is a binding site for Mg(2+).

Belongs to the MobA family. As to quaternary structure, monomer. It depends on Mg(2+) as a cofactor.

The protein resides in the cytoplasm. It carries out the reaction Mo-molybdopterin + GTP + H(+) = Mo-molybdopterin guanine dinucleotide + diphosphate. Its function is as follows. Transfers a GMP moiety from GTP to Mo-molybdopterin (Mo-MPT) cofactor (Moco or molybdenum cofactor) to form Mo-molybdopterin guanine dinucleotide (Mo-MGD) cofactor. This is Molybdenum cofactor guanylyltransferase from Bordetella petrii (strain ATCC BAA-461 / DSM 12804 / CCUG 43448).